The chain runs to 378 residues: tRNA-specific 2-thiouridylase MnmA (378 aa).

ATP contacts are provided by residues 9-16 (GVSGGVDS) and Met35. An interaction with target base in tRNA region spans residues 94 to 96 (NPD). Cys99 serves as the catalytic Nucleophile. Cys99 and Cys195 are disulfide-bonded. Gly123 contributes to the ATP binding site. The interaction with tRNA stretch occupies residues 145 to 147 (KDQ). The active-site Cysteine persulfide intermediate is Cys195. Residues 307-308 (RY) form an interaction with tRNA region.

This sequence belongs to the MnmA/TRMU family.

The protein resides in the cytoplasm. It carries out the reaction S-sulfanyl-L-cysteinyl-[protein] + uridine(34) in tRNA + AH2 + ATP = 2-thiouridine(34) in tRNA + L-cysteinyl-[protein] + A + AMP + diphosphate + H(+). In terms of biological role, catalyzes the 2-thiolation of uridine at the wobble position (U34) of tRNA, leading to the formation of s(2)U34. This chain is tRNA-specific 2-thiouridylase MnmA, found in Xanthomonas euvesicatoria pv. vesicatoria (strain 85-10) (Xanthomonas campestris pv. vesicatoria).